An 836-amino-acid polypeptide reads, in one-letter code: RNA-binding protein 12B-A (836 aa).

The 76-residue stretch at 154-229 folds into the RRM 1 domain; the sequence is PYLFLRGLPY…RFIEVMQGSE (76 aa). A disordered region spans residues 237–277; it reads GTATEGGDTPRMRSEEHSPSRRINGRHFRKRSHSKSPRARS. Positions 244–255 are enriched in basic and acidic residues; that stretch reads DTPRMRSEEHSP. Basic residues predominate over residues 259-277; that stretch reads INGRHFRKRSHSKSPRARS. 2 consecutive RRM domains span residues 283-359 and 401-478; these read FYVH…PVSR and LCIY…LISE. Disordered stretches follow at residues 539–572 and 620–644; these read GHFKHPQGYFRQSDRRSPEDFRHSPEDYRHPWEE and SQEHFRRSYQEHIRQPPEEHFRRSR. The segment covering 550 to 572 has biased composition (basic and acidic residues); sequence QSDRRSPEDFRHSPEDYRHPWEE. Phosphoserine is present on S703. Residue K758 is modified to N6-acetyllysine. The RRM 4 domain occupies 760 to 836; the sequence is IPVKISNLPF…GPRKVKLSLL (77 aa).

This Mus musculus (Mouse) protein is RNA-binding protein 12B-A (Rbm12b1).